The chain runs to 46 residues: DNA-directed RNA polymerase subunit Rpo12 (46 aa).

Positions 8, 23, and 26 each coordinate Zn(2+).

The protein belongs to the archaeal Rpo12/eukaryotic RPC10 RNA polymerase subunit family. In terms of assembly, part of the RNA polymerase complex. Zn(2+) serves as cofactor.

The protein resides in the cytoplasm. The enzyme catalyses RNA(n) + a ribonucleoside 5'-triphosphate = RNA(n+1) + diphosphate. In terms of biological role, DNA-dependent RNA polymerase (RNAP) catalyzes the transcription of DNA into RNA using the four ribonucleoside triphosphates as substrates. The protein is DNA-directed RNA polymerase subunit Rpo12 of Archaeoglobus fulgidus (strain ATCC 49558 / DSM 4304 / JCM 9628 / NBRC 100126 / VC-16).